The following is a 334-amino-acid chain: Ribosomal RNA small subunit methyltransferase H (334 aa).

Residues 53–55 (GGH), D72, F99, D122, and H129 contribute to the S-adenosyl-L-methionine site.

This sequence belongs to the methyltransferase superfamily. RsmH family.

It is found in the cytoplasm. It carries out the reaction cytidine(1402) in 16S rRNA + S-adenosyl-L-methionine = N(4)-methylcytidine(1402) in 16S rRNA + S-adenosyl-L-homocysteine + H(+). In terms of biological role, specifically methylates the N4 position of cytidine in position 1402 (C1402) of 16S rRNA. The polypeptide is Ribosomal RNA small subunit methyltransferase H (Leptospira interrogans serogroup Icterohaemorrhagiae serovar copenhageni (strain Fiocruz L1-130)).